Consider the following 186-residue polypeptide: Agglutinin isolectin 3 (186 aa).

At Gln1 the chain carries Pyrrolidone carboxylic acid. 4 Chitin-binding type-1 domains span residues 1-42 (QRCG…ACWT), 43-85 (SKRC…PCRA), 86-128 (DIKC…ACST), and 129-171 (DKPC…GCDG). Disulfide bonds link Cys3/Cys18, Cys12/Cys24, Cys17/Cys31, Cys35/Cys40, Cys46/Cys61, Cys55/Cys67, Cys60/Cys74, Cys78/Cys83, Cys89/Cys104, Cys98/Cys110, Cys103/Cys117, Cys121/Cys126, Cys132/Cys147, Cys141/Cys153, Cys146/Cys160, and Cys164/Cys169. Residue 10 to 12 (MEC) participates in substrate binding. 62 to 73 (SQYGHCGFGAEY) lines the substrate pocket. 114 to 115 (SE) serves as a coordination point for substrate. A propeptide spanning residues 172-186 (VFAEAIATNSTLLAE) is cleaved from the precursor. An N-linked (GlcNAc...) asparagine glycan is attached at Asn180.

In terms of assembly, homodimer, u-shaped.

N-acetyl-D-glucosamine / N-acetyl-D-neuraminic acid binding lectin. This Triticum aestivum (Wheat) protein is Agglutinin isolectin 3.